The primary structure comprises 45 residues: Turripeptide OL11-like (45 aa).

Cystine bridges form between Cys-1/Cys-31, Cys-5/Cys-24, and Cys-13/Cys-45. The Kazal-like domain occupies 1 to 45; it reads CMTICTMEYWPVCGSDGKTYPNKCHLTSTACTSQKDITVLHEGKC.

The protein belongs to the conopeptide P-like superfamily. Expressed by the venom duct.

The protein resides in the secreted. Functionally, acts as a neurotoxin by inhibiting an ion channel. May also act as a serine protease inhibitor, since it possess the kazal serine protease inhibitor signature. This is Turripeptide OL11-like from Lophiotoma albina (Sea snail).